A 63-amino-acid chain; its full sequence is Cytochrome c oxidase subunit 7C, mitochondrial (63 aa).

Residues 1–16 constitute a mitochondrion transit peptide; it reads MLGHSIRRFTTSVVRR. Residues 17–33 lie on the Mitochondrial matrix side of the membrane; that stretch reads SHYEEGPGKNLPFSVKN. Lys-25 is modified (N6-acetyllysine; alternate). At Lys-25 the chain carries N6-succinyllysine; alternate. Residues 34 to 60 traverse the membrane as a helical segment; it reads KWALLVKMSLYFGSAFATPFLIVRHQL. At 61–63 the chain is on the mitochondrial intermembrane side; that stretch reads LKQ.

The protein belongs to the cytochrome c oxidase VIIc family. Component of the cytochrome c oxidase (complex IV, CIV), a multisubunit enzyme composed of 14 subunits. The complex is composed of a catalytic core of 3 subunits MT-CO1, MT-CO2 and MT-CO3, encoded in the mitochondrial DNA, and 11 supernumerary subunits COX4I, COX5A, COX5B, COX6A, COX6B, COX6C, COX7A, COX7B, COX7C, COX8 and NDUFA4, which are encoded in the nuclear genome. The complex exists as a monomer or a dimer and forms supercomplexes (SCs) in the inner mitochondrial membrane with NADH-ubiquinone oxidoreductase (complex I, CI) and ubiquinol-cytochrome c oxidoreductase (cytochrome b-c1 complex, complex III, CIII), resulting in different assemblies (supercomplex SCI(1)III(2)IV(1) and megacomplex MCI(2)III(2)IV(2)). Interacts with RAB5IF.

The protein resides in the mitochondrion inner membrane. It functions in the pathway energy metabolism; oxidative phosphorylation. Its function is as follows. Component of the cytochrome c oxidase, the last enzyme in the mitochondrial electron transport chain which drives oxidative phosphorylation. The respiratory chain contains 3 multisubunit complexes succinate dehydrogenase (complex II, CII), ubiquinol-cytochrome c oxidoreductase (cytochrome b-c1 complex, complex III, CIII) and cytochrome c oxidase (complex IV, CIV), that cooperate to transfer electrons derived from NADH and succinate to molecular oxygen, creating an electrochemical gradient over the inner membrane that drives transmembrane transport and the ATP synthase. Cytochrome c oxidase is the component of the respiratory chain that catalyzes the reduction of oxygen to water. Electrons originating from reduced cytochrome c in the intermembrane space (IMS) are transferred via the dinuclear copper A center (CU(A)) of subunit 2 and heme A of subunit 1 to the active site in subunit 1, a binuclear center (BNC) formed by heme A3 and copper B (CU(B)). The BNC reduces molecular oxygen to 2 water molecules using 4 electrons from cytochrome c in the IMS and 4 protons from the mitochondrial matrix. The sequence is that of Cytochrome c oxidase subunit 7C, mitochondrial (COX7C) from Papio hamadryas (Hamadryas baboon).